The following is a 349-amino-acid chain: MKISRETLHQLIENKLCQAGLKREHAATVAEVLVYADARGIHSHGAVRVEYYAERISKGGTNREPEFRLEETGPCSAILHADNAAGQVAAKMGMEHAIKTAQQNGVAVVGISRMGHSGAISYFVQQAARAGFIGISMCQSDPMVVPFGGAEIYYGTNPLAFAAPGEGDEILTFDMATTVQAWGKVLDARSRNMSIPDTWAVDKNGVPTTDPFAVHALLPAAGPKGYGLMMMIDVLSGVLLGLPFGRQVSSMYDDLHAGRNLGQLHIVINPNFFSSSELFRQHLSQTMRELNAITPAPGFNQVYYPGQDQDIKQRKAAVEGIEIVDDIYQYLISDALYNTSYETKNPFAQ.

Residue H116 is the Proton acceptor of the active site. NAD(+) contacts are provided by residues S140, D174–A176, K224, and G306–D308.

This sequence belongs to the LDH2/MDH2 oxidoreductase family. As to quaternary structure, homodimer.

The protein resides in the cytoplasm. The catalysed reaction is (S)-ureidoglycolate + NAD(+) = N-carbamoyl-2-oxoglycine + NADH + H(+). Its pathway is nitrogen metabolism; (S)-allantoin degradation; oxalurate from (S)-ureidoglycolate: step 1/1. In terms of biological role, allD plays a pivotal role as a metabolic branch-point enzyme in nitrogen utilization via the assimilation of allantoin. It is able to utilize allantoin as a sole source of nitrogen under anaerobic conditions. Catalyzes the oxidation of ureidoglycolate to oxalurate. The chain is Ureidoglycolate dehydrogenase (NAD(+)) from Escherichia coli (strain K12).